We begin with the raw amino-acid sequence, 251 residues long: Putative F-box protein PP2-B12 (251 aa).

Residues 1–46 (MNFLDLPEECIATMISFTSPFDACRISAVSKLLRSAADSNTTWERF) form the F-box domain.

The protein is Putative F-box protein PP2-B12 (PP2B12) of Arabidopsis thaliana (Mouse-ear cress).